A 135-amino-acid polypeptide reads, in one-letter code: QECKCHGVSGSCTTKTCWNTLPKFREIGFVLKEKYNDAVHVEVVRANRLRQPTFLKIKKVRSYQKPMETDLVYIERSPNYCEEDSTTGSVGTQGRLCNRTSPHTDGCDLMCCGRGYNTHQYTKVWQCNCKFHWCC.

2 disulfides stabilise this stretch: Cys-3/Cys-17 and Cys-5/Cys-12. A lipid anchor (O-palmitoleoyl serine; by PORCN) is attached at Ser-9. The segment at 41-69 is disordered linker; it reads VEVVRANRLRQPTFLKIKKVRSYQKPMET. 3 disulfides stabilise this stretch: Cys-81-Cys-112, Cys-97-Cys-107, and Cys-134-Cys-135. Residue Asn-98 is glycosylated (N-linked (GlcNAc...) asparagine).

Belongs to the Wnt family. Post-translationally, palmitoleoylation is required for efficient binding to frizzled receptors. Depalmitoleoylation leads to Wnt signaling pathway inhibition. In adults, in brain and lung.

The protein localises to the secreted. The protein resides in the extracellular space. Its subcellular location is the extracellular matrix. In terms of biological role, ligand for members of the frizzled family of seven transmembrane receptors that functions in the canonical Wnt/beta-catenin signaling pathway. Required for normal fusion of the chorion and the allantois during placenta development. Required for central nervous system (CNS) angiogenesis and blood-brain barrier regulation. This Xenopus laevis (African clawed frog) protein is Protein Wnt-7b (wnt7b).